Reading from the N-terminus, the 432-residue chain is Neuronal pentraxin-1 (432 aa).

The first 22 residues, 1–22, serve as a signal peptide directing secretion; the sequence is MPAGRAARTCALLALCLLGAGA. The interval 90-122 is disordered; the sequence is ESQSTLDPGAGEARAGGGRKQPGSGKNTMGDLS. 2 N-linked (GlcNAc...) asparagine glycosylation sites follow: Asn154 and Asn193. The 203-residue stretch at 226–428 folds into the Pentraxin (PTX) domain; it reads DKFQLTFPLR…GATKWTFEAC (203 aa). Cys256 and Cys316 are oxidised to a cystine. 5 residues coordinate Ca(2+): Asn280, Glu358, Gln359, Asp360, and Gln370.

As to quaternary structure, homooligomer or heterooligomer (probably pentamer) with neuronal pentraxin receptor (NPTXR). Requires Ca(2+) as cofactor.

It localises to the secreted. The protein resides in the cytoplasmic vesicle. Its subcellular location is the secretory vesicle. The protein localises to the endoplasmic reticulum. Functionally, may be involved in mediating uptake of synaptic material during synapse remodeling or in mediating the synaptic clustering of AMPA glutamate receptors at a subset of excitatory synapses. The polypeptide is Neuronal pentraxin-1 (NPTX1) (Homo sapiens (Human)).